The sequence spans 682 residues: MPGFLVRILPLLLPLLLLGPTRGLRNATRRVFEIAYSQDRFLKDGQPFRYISGSIHYSRVPRFYWKDRLLKMKMAGLNTIQTYVPWNFHEPWPGQYQFSEDHDVEYFLRLAHELGLLVILRPGPYICAEWEMGGLPAWLLEKEAILLRSSDPDYLAAVDKWLGVLLPKMKPLLYQNGGPIITVQVENEYGSYFACDFDYLRFLQKRFHHHLGDDVVLFTTDGAHETFLQCGALQGLYTTVDFGPGSNITDAFQIQRKCEPKGPLINSEFYTGWLDHWGQPHSTIKTEVVASSLYDILARGASVNLYMFIGGTNFAYWNGANSPYAAQPTSYDYDAPLSEAGDLTEKYFALRNVIQKFEKVPEGPIPPSTPKFAYGKVSLEKLKTVGAALDILCPSGPIKSLYPLTFIQVKQYYGFVLYRTTLPQDCSNSTPLSSPFNGVHDRAYVAVDGIPQGVLERNRVITLNITGKTGATLDLLVENMGRVNYGAYINDFKGLVSNLTLDSNILTGWTIFPLDTEDAVRSHLGGWEHRDSGRHDEAWAHSSSNYTLPAFYVGNFSIPSGIPDLPQDTFIQFPGWTKGQVWINGFNLGRYWPARGPQLTLFVPQHILMTSAPNTITVLELERAPCSSDGPELCAVEFVDRPVIGSSQIYDHLSKPVEQRLMAPPPKKTKIRGWSMYDDESL.

A signal peptide spans 1 to 23 (MPGFLVRILPLLLPLLLLGPTRG). Residues 24–28 (LRNAT) constitute a propeptide that is removed on maturation. N26 carries N-linked (GlcNAc...) asparagine glycosylation. Substrate contacts are provided by Y83, E129, and N187. The active-site Proton donor is the E188. An intrachain disulfide couples C195 to C230. An N-linked (GlcNAc...) asparagine glycan is attached at N247. The active-site Nucleophile is E268. A substrate-binding site is contributed by Y333. N464, N498, N545, and N555 each carry an N-linked (GlcNAc...) asparagine glycan. Residues C626 and C634 are joined by a disulfide bond.

It belongs to the glycosyl hydrolase 35 family. As to quaternary structure, homodimer. May form higher multimers.

The protein resides in the lysosome. It catalyses the reaction Hydrolysis of terminal non-reducing beta-D-galactose residues in beta-D-galactosides.. In terms of biological role, cleaves beta-linked terminal galactosyl residues from gangliosides, glycoproteins, and glycosaminoglycans. The sequence is that of Beta-galactosidase (GLB1) from Macaca fascicularis (Crab-eating macaque).